We begin with the raw amino-acid sequence, 539 residues long: Phenylacetyl-CoA ligase epaB (539 aa).

Residue 188–199 (RLFSSGTTGLPK) coordinates AMP. An AMP-binding region spans residues 449–525 (EVEGVLRNHP…DAIPRNASGK (77 aa)).

Belongs to the ATP-dependent AMP-binding enzyme family.

It participates in secondary metabolite biosynthesis. In terms of biological role, phenylacetyl-CoA ligase; part of the gene cluster that mediates the biosynthesis of nigerpyrone and its derivatives carbonarone A and pestalamide A. The biosynthesis pathway begins with the polyketide assembly by epaA to form phenylacetyl triketide precursor from successive condensation of two malonyl-CoA, presumably with one phenylacetyl-CoA starter unit produced by the phenylacetyl-CoA ligase epaB. For the nigerpyrone biosynthesis, the reactive polyketide chain is released as an aldehyde through the R-domain. A nonenzymatic cyclization and dehydration may create nigerpyrone. For the biosynthesis of carbonarone A and pestalamide A, an extra methyl group is added through the C-methyltransferase domain. Several further steps involving the dehydrogenase orf1, the cytochrome P450 monooxygenase orf2 and the FAD-dependent monooxygenase orf3 are required to form a carbonarone A precursor which is converted to carbonarone A via cyclization. The O-acetyltransferase epaC could catalyze the transfer of 2-methylsuccinyl-CoA, a common intermediate in the ethylmalonyl-CoA pathway, to generate the final product pestalamide A. The protein is Phenylacetyl-CoA ligase epaB of Aspergillus niger (strain ATCC MYA-4892 / CBS 513.88 / FGSC A1513).